A 201-amino-acid polypeptide reads, in one-letter code: Holliday junction resolvase RecU (201 aa).

The interval 1 to 26 (MAIGYPNGKKYAASQEELPQQKRKAP) is disordered. Residues threonine 87, aspartate 89, glutamate 102, and glutamine 121 each contribute to the Mg(2+) site.

This sequence belongs to the RecU family. It depends on Mg(2+) as a cofactor.

The protein resides in the cytoplasm. The catalysed reaction is Endonucleolytic cleavage at a junction such as a reciprocal single-stranded crossover between two homologous DNA duplexes (Holliday junction).. Its function is as follows. Endonuclease that resolves Holliday junction intermediates in genetic recombination. Cleaves mobile four-strand junctions by introducing symmetrical nicks in paired strands. Promotes annealing of linear ssDNA with homologous dsDNA. Required for DNA repair, homologous recombination and chromosome segregation. The sequence is that of Holliday junction resolvase RecU from Listeria monocytogenes serotype 4a (strain HCC23).